The sequence spans 83 residues: Alpha-neurotoxin NTX-4 (83 aa).

Residues 1 to 21 form the signal peptide; sequence MKTLLLTLLVVTIVCLDLGYT. Disulfide bonds link cysteine 24-cysteine 45, cysteine 38-cysteine 62, cysteine 64-cysteine 75, and cysteine 76-cysteine 81.

It belongs to the three-finger toxin family. Short-chain subfamily. Type I alpha-neurotoxin sub-subfamily. In terms of tissue distribution, expressed by the venom gland.

The protein resides in the secreted. Binds to muscle nicotinic acetylcholine receptor (nAChR) and inhibit acetylcholine from binding to the receptor, thereby impairing neuromuscular transmission. In Naja sputatrix (Malayan spitting cobra), this protein is Alpha-neurotoxin NTX-4.